Reading from the N-terminus, the 204-residue chain is Cysteine-rich protein 3 (204 aa).

In terms of domain architecture, LIM zinc-binding 1 spans 3-64 (WTCPRCQQPV…KPCYGALFGP (62 aa)). A disordered region spans residues 88 to 107 (ISLSPSNFSPPRPRTGLSRA). Positions 122-183 (SLCPGCGDPV…IPCYGYLFGP (62 aa)) constitute an LIM zinc-binding 2 domain.

Expressed specifically by the thymus.

The protein resides in the cytoplasm. The sequence is that of Cysteine-rich protein 3 (Crip3) from Mus musculus (Mouse).